The sequence spans 329 residues: L-lactate dehydrogenase (329 aa).

NAD(+)-binding positions include Val18, Glu39, Lys46, Tyr71, and 85 to 86 (GA). Residues Gln88 and Arg94 each coordinate substrate. Residues Ser107, 124–126 (AAN), and Ser149 contribute to the NAD(+) site. 126–129 (NPVD) provides a ligand contact to substrate. 154–157 (DSAR) lines the substrate pocket. Beta-D-fructose 1,6-bisphosphate contacts are provided by Arg159 and His174. His181 (proton acceptor) is an active-site residue. Position 226 is a phosphotyrosine (Tyr226). Thr235 serves as a coordination point for substrate.

It belongs to the LDH/MDH superfamily. LDH family. Homotetramer.

It is found in the cytoplasm. It catalyses the reaction (S)-lactate + NAD(+) = pyruvate + NADH + H(+). It participates in fermentation; pyruvate fermentation to lactate; (S)-lactate from pyruvate: step 1/1. With respect to regulation, allosterically activated by fructose 1,6-bisphosphate (FBP). Catalyzes the conversion of lactate to pyruvate. This Streptococcus equinus (Streptococcus bovis) protein is L-lactate dehydrogenase.